The chain runs to 299 residues: B3 domain-containing transcription factor NGA2 (299 aa).

A disordered region spans residues 1 to 21 (MNQEDKEKPIEEASSSMEREH). The segment at residues 23–129 (FDKVVTPSDV…KLYIDWRRRP (107 aa)) is a DNA-binding region (TF-B3). Positions 226–249 (GGGGSVNSTEEESSSSGGSIPRGR) are disordered.

Its subcellular location is the nucleus. Regulates lateral organ growth. Functionally redundant with NGA1, NGA3 and NGA4. This is B3 domain-containing transcription factor NGA2 (NGA2) from Arabidopsis thaliana (Mouse-ear cress).